Here is a 164-residue protein sequence, read N- to C-terminus: SsrA-binding protein (164 aa).

Residues 141–164 form a disordered region; that stretch reads KLHDKRQDEKQKSIKREINSALKR. Residues 145-158 show a composition bias toward basic and acidic residues; that stretch reads KRQDEKQKSIKREI.

Belongs to the SmpB family.

Its subcellular location is the cytoplasm. Its function is as follows. Required for rescue of stalled ribosomes mediated by trans-translation. Binds to transfer-messenger RNA (tmRNA), required for stable association of tmRNA with ribosomes. tmRNA and SmpB together mimic tRNA shape, replacing the anticodon stem-loop with SmpB. tmRNA is encoded by the ssrA gene; the 2 termini fold to resemble tRNA(Ala) and it encodes a 'tag peptide', a short internal open reading frame. During trans-translation Ala-aminoacylated tmRNA acts like a tRNA, entering the A-site of stalled ribosomes, displacing the stalled mRNA. The ribosome then switches to translate the ORF on the tmRNA; the nascent peptide is terminated with the 'tag peptide' encoded by the tmRNA and targeted for degradation. The ribosome is freed to recommence translation, which seems to be the essential function of trans-translation. The sequence is that of SsrA-binding protein from Prochlorococcus marinus (strain MIT 9215).